Here is a 93-residue protein sequence, read N- to C-terminus: Small ribosomal subunit protein uS19 (93 aa).

The segment at 73-93 (EFSPTRTYRGHDKKDKKIQKK) is disordered.

This sequence belongs to the universal ribosomal protein uS19 family.

Its function is as follows. Protein S19 forms a complex with S13 that binds strongly to the 16S ribosomal RNA. The protein is Small ribosomal subunit protein uS19 of Phytoplasma mali (strain AT).